Consider the following 765-residue polypeptide: Glycine--tRNA ligase (765 aa).

The transit peptide at 1-87 (MSLQLLKALP…LRSAAAEFIM (87 aa)) directs the protein to the mitochondrion. The interval 41-73 (TTTKPTPSAPPPPPPTQPQQPAATTSWGTKKQN) is disordered. A compositionally biased stretch (pro residues) spans 47-58 (PSAPPPPPPTQP). A WHEP-TRS domain is found at 95–151 (QLAPLRERVQEQGNLVRDLKAKGAPEIDVKKAVAELKARKKLLEDKELALTPSVVSF). Glu331 provides a ligand contact to glycine. ATP is bound by residues 363-365 (RNE) and 374-375 (RV). Glycine is bound at residue Glu382. 489–490 (EC) contacts ATP. 609–611 (EPS) provides a ligand contact to glycine. Arg616 lines the ATP pocket.

This sequence belongs to the class-II aminoacyl-tRNA synthetase family. As to quaternary structure, homodimer.

The protein localises to the mitochondrion. Its subcellular location is the cytoplasm. It localises to the cell projection. It is found in the axon. It carries out the reaction 2 ATP + H(+) = P(1),P(4)-bis(5'-adenosyl) tetraphosphate + diphosphate. The enzyme catalyses tRNA(Gly) + glycine + ATP = glycyl-tRNA(Gly) + AMP + diphosphate. In terms of biological role, catalyzes the ATP-dependent ligation of glycine to the 3'-end of its cognate tRNA, via the formation of an aminoacyl-adenylate intermediate (Gly-AMP). Also produces diadenosine tetraphosphate (Ap4A), a universal pleiotropic signaling molecule needed for cell regulation pathways, by direct condensation of 2 ATPs. Thereby, may play a special role in Ap4A homeostasis. Required for terminal arborization of both dendrites and axons during development. This Drosophila melanogaster (Fruit fly) protein is Glycine--tRNA ligase.